The chain runs to 1368 residues: Indole-3-acetaldehyde oxidase (1368 aa).

One can recognise a 2Fe-2S ferredoxin-type domain in the interval 19-108 (TSLVFAINGQ…GCSITTSDGL (90 aa)). Residues cysteine 60, cysteine 65, and cysteine 68 each contribute to the [2Fe-2S] cluster site. The FAD-binding PCMH-type domain maps to 246–427 (LHSRKYRWSS…LSLEIPSWHS (182 aa)).

The protein belongs to the xanthine dehydrogenase family. Aldehyde oxidases (AO) are homodimers and heterodimers of AO subunits. AO-alpha is an AAO1 homodimer; AO-beta is an AAO1-AAO2 heterodimer. Requires [2Fe-2S] cluster as cofactor. It depends on FAD as a cofactor. The cofactor is Mo-molybdopterin. Predominantly expressed in roots, seedlings, mature siliques and seeds, and to lower extent in stems and rosettes. In seedlings, mostly expressed in lower part of hypocotyls and roots.

It is found in the cytoplasm. The catalysed reaction is indole-3-acetaldehyde + O2 + H2O = (indol-3-yl)acetate + H2O2 + H(+). With respect to regulation, strongly inhibited by iodoacetate and potassium cyanide (KCN). Weakly inhibited by 2-mercaptoethanol, dithiothreitol (DTT), menadione, estradiol, 4'-(9-acridinylamino)methanesulfon-m-anisidine (mAMSA), allopurinol and tritonX-100. Not affected by p-chloromercuribenzoate. In higher plants aldehyde oxidases (AO) appear to be homo- and heterodimeric assemblies of AO subunits with probably different physiological functions. AO-alpha may be involved in the biosynthesis of auxin, and in biosynthesis of abscisic acid (ABA) in seeds. In vitro, AO-alpha uses heptaldehyde, protocatechualdehyde, benzaldehyde, indole-3-aldehyde (IAld), indole-3-acetaldehyde (IAAld), cinnamaldehyde and citral as substrates; AO-beta uses IAAld, IAld and naphtaldehyde as substrates. The sequence is that of Indole-3-acetaldehyde oxidase (AAO1) from Arabidopsis thaliana (Mouse-ear cress).